The sequence spans 91 residues: uncharacterized protein (91 aa).

Positions M1 to A25 are cleaved as a signal peptide.

This is an uncharacterized protein from Caenorhabditis elegans.